Here is a 607-residue protein sequence, read N- to C-terminus: UvrABC system protein C (607 aa).

The GIY-YIG domain occupies 19–97 (TLSGVYQMRD…IKQYQPKFNI (79 aa)). A UVR domain is found at 205 to 240 (EHLLQTLTEHMLQASAAQQYERAAIVRDQISELRTI).

Belongs to the UvrC family. In terms of assembly, interacts with UvrB in an incision complex.

It localises to the cytoplasm. The UvrABC repair system catalyzes the recognition and processing of DNA lesions. UvrC both incises the 5' and 3' sides of the lesion. The N-terminal half is responsible for the 3' incision and the C-terminal half is responsible for the 5' incision. The sequence is that of UvrABC system protein C from Dichelobacter nodosus (strain VCS1703A).